A 319-amino-acid polypeptide reads, in one-letter code: Ankyrin repeat domain-containing protein 1 (319 aa).

Residues 61–89 adopt a coiled-coil conformation; that stretch reads KSEKQREAELKKKKLEQRSKLENLEDLEI. ANK repeat units lie at residues 152–181, 185–214, 218–247, 251–280, and 284–315; these read YKRTALHRACLEGHLAIVEKLMEAGAQIEF, LESTAIHWASRGGNLDVLKLLLNKGAKISA, LLSTALHVAVRTGHYECAEHLIACEADLNA, EGDTPLHDAVRLNRYKMIRLLIMYGADLNI, and AGKTPMDLVLHWQNGTKAIFDSLRENSYKTSR.

As to quaternary structure, interacts with YBX1. Interacts with TTN/titin. As to expression, mainly expressed in activated vascular endothelial cells. To a lower extent, also expressed in hepatoma cells.

Its subcellular location is the nucleus. Its function is as follows. May play an important role in endothelial cell activation. May act as a nuclear transcription factor that negatively regulates the expression of cardiac genes. Induction seems to be correlated with apoptotic cell death in hepatoma cells. This is Ankyrin repeat domain-containing protein 1 (ANKRD1) from Homo sapiens (Human).